The sequence spans 219 residues: Deoxyribose-phosphate aldolase (219 aa).

Asp88 (proton donor/acceptor) is an active-site residue. Lys150 (schiff-base intermediate with acetaldehyde) is an active-site residue. Residue Lys179 is the Proton donor/acceptor of the active site.

Belongs to the DeoC/FbaB aldolase family. DeoC type 1 subfamily.

Its subcellular location is the cytoplasm. It catalyses the reaction 2-deoxy-D-ribose 5-phosphate = D-glyceraldehyde 3-phosphate + acetaldehyde. It participates in carbohydrate degradation; 2-deoxy-D-ribose 1-phosphate degradation; D-glyceraldehyde 3-phosphate and acetaldehyde from 2-deoxy-alpha-D-ribose 1-phosphate: step 2/2. In terms of biological role, catalyzes a reversible aldol reaction between acetaldehyde and D-glyceraldehyde 3-phosphate to generate 2-deoxy-D-ribose 5-phosphate. The protein is Deoxyribose-phosphate aldolase of Aquifex aeolicus (strain VF5).